Here is a 164-residue protein sequence, read N- to C-terminus: 3-dehydroquinate dehydratase (164 aa).

Tyr-22 acts as the Proton acceptor in catalysis. Substrate is bound by residues Asn-73, His-79, and Asp-86. The active-site Proton donor is His-99. Substrate-binding positions include 100 to 101 (IS) and Arg-110.

It belongs to the type-II 3-dehydroquinase family. In terms of assembly, homododecamer.

It carries out the reaction 3-dehydroquinate = 3-dehydroshikimate + H2O. Its pathway is metabolic intermediate biosynthesis; chorismate biosynthesis; chorismate from D-erythrose 4-phosphate and phosphoenolpyruvate: step 3/7. Functionally, catalyzes a trans-dehydration via an enolate intermediate. The sequence is that of 3-dehydroquinate dehydratase from Aliarcobacter butzleri (strain RM4018) (Arcobacter butzleri).